Consider the following 206-residue polypeptide: Probable glutathione S-transferase 8 (206 aa).

The GST N-terminal domain occupies 2–79 (VHYKLSYFPI…FLARQFGING (78 aa)). Glutathione contacts are provided by residues tyrosine 8, tryptophan 39, lysine 43, 49–51 (GQL), and 63–64 (QS). The region spanning 81-206 (CAWEEAQVNS…WLETRPETQF (126 aa)) is the GST C-terminal domain.

This sequence belongs to the GST superfamily. Sigma family.

It catalyses the reaction RX + glutathione = an S-substituted glutathione + a halide anion + H(+). Its function is as follows. Conjugation of reduced glutathione to a wide number of exogenous and endogenous hydrophobic electrophiles. The chain is Probable glutathione S-transferase 8 (gst-8) from Caenorhabditis elegans.